A 68-amino-acid chain; its full sequence is MLLKSYVFFLLSLLIVGLFTSRDADAQYEDLVTGYLRKGGVSGVSDFEPIEVFGEDYDSDEADEDGKG.

A signal peptide spans 1-26 (MLLKSYVFFLLSLLIVGLFTSRDADA). Positions 27 to 38 (QYEDLVTGYLRK) are excised as a propeptide.

In terms of tissue distribution, expressed in salivary glands.

Its subcellular location is the secreted. Functionally, horsefly salivary gland immunosuppressant protein that likely inhibits the host inflammatory response by regulation of anti- and pro-inflammatory cytokines. When tested on mouse splenocytes in the presence of LPS, it increases the secretion of the proinflammatory cytokine interleukin-10 (IL10) and decreases the secretion of the proinflammatory cytokine interferon-gamma (IFNG) in a dose-dependent manner. This Tabanus yao (Horsefly) protein is Tabimmunregulin 1.